A 197-amino-acid polypeptide reads, in one-letter code: Large ribosomal subunit protein bL25 (197 aa).

This sequence belongs to the bacterial ribosomal protein bL25 family. CTC subfamily. As to quaternary structure, part of the 50S ribosomal subunit; part of the 5S rRNA/L5/L18/L25 subcomplex. Contacts the 5S rRNA. Binds to the 5S rRNA independently of L5 and L18.

Functionally, this is one of the proteins that binds to the 5S RNA in the ribosome where it forms part of the central protuberance. The sequence is that of Large ribosomal subunit protein bL25 from Pseudomonas putida (strain GB-1).